A 321-amino-acid polypeptide reads, in one-letter code: Lipoyl synthase (321 aa).

The [4Fe-4S] cluster site is built by Cys-68, Cys-73, Cys-79, Cys-94, Cys-98, Cys-101, and Ser-308. The region spanning 80-297 (FNHGTATFMI…KEIALELGFT (218 aa)) is the Radical SAM core domain.

The protein belongs to the radical SAM superfamily. Lipoyl synthase family. [4Fe-4S] cluster serves as cofactor.

It is found in the cytoplasm. The catalysed reaction is [[Fe-S] cluster scaffold protein carrying a second [4Fe-4S](2+) cluster] + N(6)-octanoyl-L-lysyl-[protein] + 2 oxidized [2Fe-2S]-[ferredoxin] + 2 S-adenosyl-L-methionine + 4 H(+) = [[Fe-S] cluster scaffold protein] + N(6)-[(R)-dihydrolipoyl]-L-lysyl-[protein] + 4 Fe(3+) + 2 hydrogen sulfide + 2 5'-deoxyadenosine + 2 L-methionine + 2 reduced [2Fe-2S]-[ferredoxin]. Its pathway is protein modification; protein lipoylation via endogenous pathway; protein N(6)-(lipoyl)lysine from octanoyl-[acyl-carrier-protein]: step 2/2. Catalyzes the radical-mediated insertion of two sulfur atoms into the C-6 and C-8 positions of the octanoyl moiety bound to the lipoyl domains of lipoate-dependent enzymes, thereby converting the octanoylated domains into lipoylated derivatives. This chain is Lipoyl synthase, found in Aliivibrio fischeri (strain MJ11) (Vibrio fischeri).